Consider the following 227-residue polypeptide: Cytochrome c oxidase subunit 2 (227 aa).

Residues 1–14 are Mitochondrial intermembrane-facing; the sequence is MAHPMQLGFQDAAS. A helical membrane pass occupies residues 15–45; the sequence is PIMEELLYFHDHTLMIVFMISSLVLYIISLM. Over 46–59 the chain is Mitochondrial matrix; it reads LSTELTHTSTMDAQ. The helical transmembrane segment at 60–87 threads the bilayer; that stretch reads EVETVWTILPAVILILIALPSLRILYMM. The Mitochondrial intermembrane segment spans residues 88-227; the sequence is DEINTPSMTL…YFEEWLLKSL (140 aa). Cu cation-binding residues include H161, C196, E198, C200, H204, and M207. Residue E198 coordinates Mg(2+). A Phosphotyrosine modification is found at Y218.

It belongs to the cytochrome c oxidase subunit 2 family. As to quaternary structure, component of the cytochrome c oxidase (complex IV, CIV), a multisubunit enzyme composed of 14 subunits. The complex is composed of a catalytic core of 3 subunits MT-CO1, MT-CO2 and MT-CO3, encoded in the mitochondrial DNA, and 11 supernumerary subunits COX4I, COX5A, COX5B, COX6A, COX6B, COX6C, COX7A, COX7B, COX7C, COX8 and NDUFA4, which are encoded in the nuclear genome. The complex exists as a monomer or a dimer and forms supercomplexes (SCs) in the inner mitochondrial membrane with NADH-ubiquinone oxidoreductase (complex I, CI) and ubiquinol-cytochrome c oxidoreductase (cytochrome b-c1 complex, complex III, CIII), resulting in different assemblies (supercomplex SCI(1)III(2)IV(1) and megacomplex MCI(2)III(2)IV(2)). Found in a complex with TMEM177, COA6, COX18, COX20, SCO1 and SCO2. Interacts with TMEM177 in a COX20-dependent manner. Interacts with COX20. Interacts with COX16. Cu cation serves as cofactor.

It is found in the mitochondrion inner membrane. The enzyme catalyses 4 Fe(II)-[cytochrome c] + O2 + 8 H(+)(in) = 4 Fe(III)-[cytochrome c] + 2 H2O + 4 H(+)(out). Functionally, component of the cytochrome c oxidase, the last enzyme in the mitochondrial electron transport chain which drives oxidative phosphorylation. The respiratory chain contains 3 multisubunit complexes succinate dehydrogenase (complex II, CII), ubiquinol-cytochrome c oxidoreductase (cytochrome b-c1 complex, complex III, CIII) and cytochrome c oxidase (complex IV, CIV), that cooperate to transfer electrons derived from NADH and succinate to molecular oxygen, creating an electrochemical gradient over the inner membrane that drives transmembrane transport and the ATP synthase. Cytochrome c oxidase is the component of the respiratory chain that catalyzes the reduction of oxygen to water. Electrons originating from reduced cytochrome c in the intermembrane space (IMS) are transferred via the dinuclear copper A center (CU(A)) of subunit 2 and heme A of subunit 1 to the active site in subunit 1, a binuclear center (BNC) formed by heme A3 and copper B (CU(B)). The BNC reduces molecular oxygen to 2 water molecules using 4 electrons from cytochrome c in the IMS and 4 protons from the mitochondrial matrix. In Nycticebus coucang (Slow loris), this protein is Cytochrome c oxidase subunit 2 (MT-CO2).